Reading from the N-terminus, the 233-residue chain is Probable RNA 2'-phosphotransferase (233 aa).

Belongs to the KptA/TPT1 family.

Its function is as follows. Removes the 2'-phosphate from RNA via an intermediate in which the phosphate is ADP-ribosylated by NAD followed by a presumed transesterification to release the RNA and generate ADP-ribose 1''-2''-cyclic phosphate (APPR&gt;P). May function as an ADP-ribosylase. In Hyperthermus butylicus (strain DSM 5456 / JCM 9403 / PLM1-5), this protein is Probable RNA 2'-phosphotransferase.